The primary structure comprises 94 residues: RxLR effector protein PITG_15972 (94 aa).

A signal peptide spans 1 to 21 (MRAVYILAMACAATLQASSSA). Positions 50–65 (RLLRVEDKEEETEEER) match the RxLR-dEER motif.

Belongs to the RxLR effector family.

Its subcellular location is the secreted. It is found in the host cytoplasm. The protein resides in the host nucleus. Its function is as follows. Effector that enhances P.infestans colonization of Nicotiana benthamiana leaves. This is RxLR effector protein PITG_15972 from Phytophthora infestans (strain T30-4) (Potato late blight agent).